Consider the following 1411-residue polypeptide: Regulating synaptic membrane exocytosis protein 2 (1411 aa).

Positions 1-33 (MSAPVGPRGRLAPIPAASQPPLQPEMPDLSHLT) are disordered. The region spanning 26-185 (MPDLSHLTEE…TKSGAWFYNS (160 aa)) is the RabBD domain. The FYVE-type zinc-finger motif lies at 117 to 173 (KGDAPTCGICHKTKFADGCGHNCSYCQTKFCARCGGRVSLRSNKVMWVCNLCRKQQE). Zn(2+)-binding residues include Cys-123, Cys-126, Cys-139, Cys-142, Cys-147, Cys-150, Cys-165, and Cys-168. Basic and acidic residues-rich tracts occupy residues 203 to 216 (NEEAPQEKKPKLHE), 273 to 287 (DQNRRYDQREEREEY), 318 to 329 (DSDHLSYRDSNR), 348 to 366 (RDEYERQRREEEYQSRYRS), 382 to 401 (EQMRIHAEVSRARHERRHSD), and 410 to 434 (EDSRISMLRMDRPSRQRSISERRAA). 2 disordered regions span residues 203–598 (NEEA…SERQ) and 623–650 (SGVDTCSSTTLNEEHSHSDKHPVTWQPS). Position 400 is a phosphoserine (Ser-400). Positions 451–463 (GPSSYAQRTTNHS) are enriched in polar residues. Basic and acidic residues predominate over residues 475-492 (DRPDLRRTDSLRKQHHLD). A compositionally biased stretch (polar residues) spans 510-521 (RNDSLSSDQSES). Residues 528–537 (KPHKSKKGGK) are compositionally biased toward basic residues. Positions 558 to 568 (SCDDVEIESES) are enriched in acidic residues. 2 stretches are compositionally biased toward basic and acidic residues: residues 569–583 (VSEKGDSQKGKRKTS) and 634–644 (NEEHSHSDKHP). The region spanning 668–754 (DGSVPRDSGA…EPQVELVVSR (87 aa)) is the PDZ domain. At Thr-689 the chain carries Phosphothreonine. Residues 762-793 (IPDSTHAQLESSSSSFESQKMDRPSISVTSPM) form a disordered region. Phosphoserine is present on residues Ser-791 and Ser-794. The region spanning 805–928 (LSGQLSIKLW…ALLDDEPHWY (124 aa)) is the C2 1 domain. Disordered regions lie at residues 939–973 (PLPHPSPYMPRRQLHGESPTRRLQRSKRISDSEVS) and 993–1190 (DLQS…STET). Polar residues-rich tracts occupy residues 994 to 1015 (LQSSTLSVPEQVMSSNHCSPSG) and 1049 to 1059 (RTMTGHYNTIS). Positions 1060 to 1113 (RMDRHRVMDDHYSPDRDRDCEAADRQPYHRSRSTEQRPLLERTTTRSRSTERPD) are enriched in basic and acidic residues. Over residues 1143-1153 (GSVQTSPSSTP) the composition is skewed to polar residues. Ser-1148 carries the phosphoserine modification. The 119-residue stretch at 1257–1375 (AMGDIQVGMM…ELSNMVIGWF (119 aa)) folds into the C2 2 domain. 2 positions are modified to phosphoserine: Ser-1396 and Ser-1399.

As to quaternary structure, interacts with RAB3A and RAB3B that have been activated by GTP-binding. Interacts with RAB3C, RAB3D and RAB26. Interacts with TSPOAP1 and RIMBP2. Interacts with PPFIA3 and PPFIA4. Interacts via its zinc finger with the first C2 domain of UNC13A. Forms a complex consisting of UNC13A, RIMS2 and RAB3A. Heterodimer with PCLO. Part of a ternary complex involving PCLO and EPAC2. In terms of tissue distribution, widely expressed. Expressed in melanocytes. In fetal tissues, predominantly expressed in the brain. In the retina, expressed in the outer plexiform layer (at protein level). In the cerebellum, expressed in Purkinje cells (at protein level). In the pancreas, expressed in Langerhans islets (at protein level).

Its subcellular location is the cell membrane. It localises to the synapse. The protein resides in the presynaptic cell membrane. Its function is as follows. Rab effector involved in exocytosis. May act as scaffold protein. Plays a role in dendrite formation by melanocytes. The chain is Regulating synaptic membrane exocytosis protein 2 (RIMS2) from Homo sapiens (Human).